The chain runs to 1025 residues: Multidrug resistance protein MdtC (1025 aa).

The next 12 helical transmembrane spans lie at 3 to 23, 333 to 353, 360 to 380, 387 to 407, 431 to 451, 463 to 483, 528 to 548, 853 to 873, 875 to 895, 897 to 917, 953 to 973, and 984 to 1004; these read FFALFIYRPVATILLSVAITL, EVEQTLIISVALVILVVFLFL, IIPAVAVPVSLIGTFAAMYLC, LSLMALTIATGFVVDDAIVVL, VGFTVLSMSLSLVAVFLPLLL, FAVTLSVAIGISLLVSLTLTP, LVGVVLLGTIALNIWLYISIP, VILIIAAIATVYIVLGILYES, VHPLTILSTLPSAGVGALLAL, LFNAPFSLIALIGIMLLIGIV, PIMMTTLAALFGALPLVLSGG, and ITIVGGLVMSQLLTLYTTPVV.

This sequence belongs to the resistance-nodulation-cell division (RND) (TC 2.A.6) family. MdtC subfamily. As to quaternary structure, part of a tripartite efflux system composed of MdtA, MdtB and MdtC. MdtC forms a heteromultimer with MdtB.

The protein localises to the cell inner membrane. Its function is as follows. The MdtABC tripartite complex confers resistance against novobiocin and deoxycholate. The chain is Multidrug resistance protein MdtC from Escherichia fergusonii (strain ATCC 35469 / DSM 13698 / CCUG 18766 / IAM 14443 / JCM 21226 / LMG 7866 / NBRC 102419 / NCTC 12128 / CDC 0568-73).